The following is a 194-amino-acid chain: Putative manganese efflux pump MntP (194 aa).

A run of 6 helical transmembrane segments spans residues 3 to 23, 37 to 57, 69 to 89, 110 to 132, 147 to 167, and 172 to 192; these read PFSIVLIGFAMSTDAFAAAIG, LRAGLIFGCIEAITPVIGWLL, DHWIAFVLLGALGTHMIVAGL, LGLATTGFATSIDAMAVGVSLAF, CTFSMVTAGVMLGRALGNLIG, and MLGGLILVIVGSVILYEHLSG.

Belongs to the MntP (TC 9.B.29) family.

The protein localises to the cell inner membrane. Probably functions as a manganese efflux pump. The polypeptide is Putative manganese efflux pump MntP (Xanthomonas axonopodis pv. citri (strain 306)).